A 427-amino-acid chain; its full sequence is Adenylosuccinate synthetase (427 aa).

Residues 12-18 and 40-42 contribute to the GTP site; these read GDEGKGK and GHT. Aspartate 13 functions as the Proton acceptor in the catalytic mechanism. Positions 13 and 40 each coordinate Mg(2+). Residues 13-16, 38-41, threonine 128, arginine 142, glutamine 223, threonine 238, and arginine 302 each bind IMP; these read DEGK and NAGH. The active-site Proton donor is the histidine 41. 298–304 provides a ligand contact to substrate; sequence TVTGRAR. Residues arginine 304, 330–332, and 412–414 contribute to the GTP site; these read RLD and SVG.

This sequence belongs to the adenylosuccinate synthetase family. Homodimer. Requires Mg(2+) as cofactor.

Its subcellular location is the cytoplasm. The enzyme catalyses IMP + L-aspartate + GTP = N(6)-(1,2-dicarboxyethyl)-AMP + GDP + phosphate + 2 H(+). Its pathway is purine metabolism; AMP biosynthesis via de novo pathway; AMP from IMP: step 1/2. In terms of biological role, plays an important role in the de novo pathway of purine nucleotide biosynthesis. Catalyzes the first committed step in the biosynthesis of AMP from IMP. This is Adenylosuccinate synthetase from Brachyspira hyodysenteriae (strain ATCC 49526 / WA1).